The sequence spans 391 residues: S-adenosylmethionine synthase (391 aa).

ATP is bound at residue histidine 19. A Mg(2+)-binding site is contributed by aspartate 21. Glutamate 47 is a K(+) binding site. Positions 60 and 103 each coordinate L-methionine. The interval 103–113 (QSPDIAQGVDR) is flexible loop. Residues 168 to 170 (DGK), 236 to 237 (RF), aspartate 245, 251 to 252 (RK), alanine 268, and lysine 272 each bind ATP. Aspartate 245 serves as a coordination point for L-methionine. Lysine 276 provides a ligand contact to L-methionine.

Belongs to the AdoMet synthase family. In terms of assembly, homotetramer; dimer of dimers. Requires Mg(2+) as cofactor. K(+) serves as cofactor.

The protein resides in the cytoplasm. It carries out the reaction L-methionine + ATP + H2O = S-adenosyl-L-methionine + phosphate + diphosphate. Its pathway is amino-acid biosynthesis; S-adenosyl-L-methionine biosynthesis; S-adenosyl-L-methionine from L-methionine: step 1/1. Catalyzes the formation of S-adenosylmethionine (AdoMet) from methionine and ATP. The overall synthetic reaction is composed of two sequential steps, AdoMet formation and the subsequent tripolyphosphate hydrolysis which occurs prior to release of AdoMet from the enzyme. In Oleidesulfovibrio alaskensis (strain ATCC BAA-1058 / DSM 17464 / G20) (Desulfovibrio alaskensis), this protein is S-adenosylmethionine synthase.